Consider the following 652-residue polypeptide: Leucine-rich repeat-containing protein 4 (652 aa).

An N-terminal signal peptide occupies residues 1-40 (MKLLWQVTVHHTWNAVLLPVVYLTAQVWILCAAIAAAASA). The Extracellular segment spans residues 1–526 (MKLLWQVTVH…SLDEVMKTTK (526 aa)). In terms of domain architecture, LRRNT spans 41 to 74 (GPQNCPSVCSCSNQFSKVVCTRRGLSEVPQGIPS). 2 disulfide bridges follow: C45-C51 and C49-C60. LRR repeat units follow at residues 75 to 96 (NTRY…TFRH), 99 to 120 (HLEV…AFNG), 123 to 144 (SLNT…AFEY), 147 to 168 (KLRE…AFNR), 171 to 193 (SLMR…AFEG), 196 to 217 (NLKY…TPLV), 218 to 239 (GLEE…SFHG), 242 to 263 (SLKK…AFDG), and 266 to 287 (SLVE…LFTP). The 53-residue stretch at 299 to 351 (NPWNCDCDILWLAWWLREYIPTNSTCCGRCHAPMHMRGRYLVEVDQASFQCSA) folds into the LRRCT domain. Cystine bridges form between C303–C328 and C305–C349. Residues N321 and N362 are each glycosylated (N-linked (GlcNAc...) asparagine). The 90-residue stretch at 352–441 (PFIMDAPRDL…SNASAYLNVS (90 aa)) folds into the Ig-like C2-type domain. C373 and C423 are oxidised to a cystine. The chain crosses the membrane as a helical span at residues 527–547 (IIIGCFVAVTLLAAAMLIVFY). The Cytoplasmic portion of the chain corresponds to 548-652 (KLRKRHQQRS…TKDKVQETQI (105 aa)).

Interacts (via LRR repeats) with NTNG2. Interacts with DLG4. Found in a complex with NMDA receptors. Post-translationally, N-glycosylated. In terms of tissue distribution, mainly expressed in the brain. Expression is concentrated in the olfactory bulb, cortex, hippocampus and cerebellum in adult brain. Detected both embryonically and postnatally with stronger expression in postnatal stages.

It localises to the membrane. The protein localises to the postsynaptic cell membrane. Functionally, synaptic adhesion protein. Regulates the formation of exitatory synapses through the recruitment of pre-and-postsynaptic proteins. Organize the lamina/pathway-specific differentiation of dendrites. Plays an important role for auditory synaptic responses. Involved in the suppression of glioma. In Rattus norvegicus (Rat), this protein is Leucine-rich repeat-containing protein 4 (Lrrc4).